Reading from the N-terminus, the 205-residue chain is Ribosome maturation factor RimP (205 aa).

Polar residues predominate over residues 1–12; it reads MSNAEAQASSDH. Disordered stretches follow at residues 1–24 and 186–205; these read MSNA…APAH and FSHL…SEEA.

The protein belongs to the RimP family.

It localises to the cytoplasm. In terms of biological role, required for maturation of 30S ribosomal subunits. The sequence is that of Ribosome maturation factor RimP from Pseudarthrobacter chlorophenolicus (strain ATCC 700700 / DSM 12829 / CIP 107037 / JCM 12360 / KCTC 9906 / NCIMB 13794 / A6) (Arthrobacter chlorophenolicus).